The following is a 716-amino-acid chain: ATP-dependent zinc metalloprotease FTSH 1, chloroplastic (716 aa).

Residues Met1–Arg48 constitute a chloroplast transit peptide. A thylakoid-targeting transit peptide spans Ser49–Ala86. The helical transmembrane segment at Phe204–Phe224 threads the bilayer. Residue Gly302 to Thr309 coordinates ATP. His524 provides a ligand contact to Zn(2+). The active site involves Glu525. Zn(2+) is bound by residues His528 and Asp605.

It in the N-terminal section; belongs to the AAA ATPase family. In the C-terminal section; belongs to the peptidase M41 family. Interacts with CHIP and HSP70. Heterohexamers with FTSH2, FTSH5 and FTSH8. Zn(2+) serves as cofactor. The FTSH1 precursor is ubiquitinated by CHIP in the cytoplasm. In terms of tissue distribution, ubiquitous.

The protein localises to the plastid. Its subcellular location is the chloroplast thylakoid membrane. Its function is as follows. Part of a complex that function as an ATP-dependent zinc metallopeptidase. Involved in the thylakoid formation and in the removal of damaged D1 in the photosystem II, preventing cell death under high-intensity light conditions. The chain is ATP-dependent zinc metalloprotease FTSH 1, chloroplastic (FTSH1) from Arabidopsis thaliana (Mouse-ear cress).